Reading from the N-terminus, the 424-residue chain is Histidinol dehydrogenase (424 aa).

3 residues coordinate NAD(+): Tyr121, Gln183, and Asn206. 3 residues coordinate substrate: Ser229, Gln251, and His254. 2 residues coordinate Zn(2+): Gln251 and His254. Residues Glu319 and His320 each act as proton acceptor in the active site. Substrate-binding residues include His320, Asp353, Glu407, and His412. Asp353 serves as a coordination point for Zn(2+). His412 is a Zn(2+) binding site.

Belongs to the histidinol dehydrogenase family. The cofactor is Zn(2+).

The enzyme catalyses L-histidinol + 2 NAD(+) + H2O = L-histidine + 2 NADH + 3 H(+). Its pathway is amino-acid biosynthesis; L-histidine biosynthesis; L-histidine from 5-phospho-alpha-D-ribose 1-diphosphate: step 9/9. Catalyzes the sequential NAD-dependent oxidations of L-histidinol to L-histidinaldehyde and then to L-histidine. The polypeptide is Histidinol dehydrogenase (Halalkalibacterium halodurans (strain ATCC BAA-125 / DSM 18197 / FERM 7344 / JCM 9153 / C-125) (Bacillus halodurans)).